Consider the following 534-residue polypeptide: Peptide chain release factor 3 (534 aa).

In terms of domain architecture, tr-type G spans 9 to 278; the sequence is ARRRTFAIIS…FFIEHAPPPQ (270 aa). Residues 18–25, 86–90, and 140–143 each bind GTP; these read SHPDAGKT, DTPGH, and NKLD.

It belongs to the TRAFAC class translation factor GTPase superfamily. Classic translation factor GTPase family. PrfC subfamily.

It localises to the cytoplasm. Its function is as follows. Increases the formation of ribosomal termination complexes and stimulates activities of RF-1 and RF-2. It binds guanine nucleotides and has strong preference for UGA stop codons. It may interact directly with the ribosome. The stimulation of RF-1 and RF-2 is significantly reduced by GTP and GDP, but not by GMP. The protein is Peptide chain release factor 3 of Xanthomonas oryzae pv. oryzae (strain MAFF 311018).